The primary structure comprises 103 residues: Small ribosomal subunit protein uS14c (103 aa).

Positions 34-56 are disordered; the sequence is KVSPLSLSEKTKMREKLQSLPRN.

It belongs to the universal ribosomal protein uS14 family. Part of the 30S ribosomal subunit.

The protein localises to the plastid. Its subcellular location is the chloroplast. Binds 16S rRNA, required for the assembly of 30S particles. The protein is Small ribosomal subunit protein uS14c of Triticum aestivum (Wheat).